Reading from the N-terminus, the 254-residue chain is Ubiquinone biosynthesis O-methyltransferase (254 aa).

S-adenosyl-L-methionine-binding residues include Arg47, Gly76, Asp97, and Leu141.

Belongs to the methyltransferase superfamily. UbiG/COQ3 family.

The enzyme catalyses a 3-demethylubiquinol + S-adenosyl-L-methionine = a ubiquinol + S-adenosyl-L-homocysteine + H(+). It catalyses the reaction a 3-(all-trans-polyprenyl)benzene-1,2-diol + S-adenosyl-L-methionine = a 2-methoxy-6-(all-trans-polyprenyl)phenol + S-adenosyl-L-homocysteine + H(+). The protein operates within cofactor biosynthesis; ubiquinone biosynthesis. Its function is as follows. O-methyltransferase that catalyzes the 2 O-methylation steps in the ubiquinone biosynthetic pathway. The protein is Ubiquinone biosynthesis O-methyltransferase of Maricaulis maris (strain MCS10) (Caulobacter maris).